The following is a 327-amino-acid chain: GTPase Obg (327 aa).

In terms of domain architecture, Obg spans 1-159; that stretch reads MQFIDQANII…WEVQLELKLL (159 aa). The OBG-type G domain occupies 160–327; it reads AEVGIIGLPN…PLLSEVWKRI (168 aa). ATP-binding positions include 166 to 173, 191 to 195, 213 to 216, 280 to 283, and 309 to 311; these read GLPNAGKS, FTTLI, DIPG, NKME, and SSS. Residues Ser173 and Thr193 each contribute to the Mg(2+) site.

This sequence belongs to the TRAFAC class OBG-HflX-like GTPase superfamily. OBG GTPase family. As to quaternary structure, monomer. The cofactor is Mg(2+).

The protein localises to the cytoplasm. An essential GTPase which binds GTP, GDP and possibly (p)ppGpp with moderate affinity, with high nucleotide exchange rates and a fairly low GTP hydrolysis rate. Plays a role in control of the cell cycle, stress response, ribosome biogenesis and in those bacteria that undergo differentiation, in morphogenesis control. This Prochlorococcus marinus subsp. pastoris (strain CCMP1986 / NIES-2087 / MED4) protein is GTPase Obg.